The primary structure comprises 158 residues: Interleukin-36 alpha (158 aa).

Positions Met1–Leu5 are excised as a propeptide. 3'-nitrotyrosine is present on Tyr96.

This sequence belongs to the IL-1 family. In terms of assembly, interacts with TMED10; the interaction mediates the translocation from the cytoplasm into the ERGIC (endoplasmic reticulum-Golgi intermediate compartment) and thereby secretion. N-terminal truncation leads to a dramatic enhancement of its activity (&gt;1000-fold). Expressed in immune system and fetal brain, but not in other tissues tested or in multiple hematopoietic cell lines. Predominantly expressed in skin keratinocytes but not in fibroblasts, endothelial cells or melanocytes. Increased in lesional psoriasis skin.

It localises to the cytoplasm. It is found in the secreted. Functionally, cytokine that binds to and signals through the IL1RL2/IL-36R receptor which in turn activates NF-kappa-B and MAPK signaling pathways in target cells linked to a pro-inflammatory response. Part of the IL-36 signaling system that is thought to be present in epithelial barriers and to take part in local inflammatory response; similar to the IL-1 system with which it shares the coreceptor IL1RAP. Seems to be involved in skin inflammatory response by acting on keratinocytes, dendritic cells and indirectly on T-cells to drive tissue infiltration, cell maturation and cell proliferation. In cultured keratinocytes induces the expression of macrophage, T-cell, and neutrophil chemokines, such as CCL3, CCL4, CCL5, CCL2, CCL17, CCL22, CL20, CCL5, CCL2, CCL17, CCL22, CXCL8, CCL20 and CXCL1, and the production of pro-inflammatory cytokines such as TNF-alpha, IL-8 and IL-6. In cultured monocytes up-regulates expression of IL-1A, IL-1B and IL-6. In myeloid dendritic cells involved in cell maturation by up-regulating surface expression of CD83, CD86 and HLA-DR. In monocyte-derived dendritic cells facilitates dendritic cell maturation and drives T-cell proliferation. May play a role in pro-inflammatory effects in the lung. This Homo sapiens (Human) protein is Interleukin-36 alpha.